The chain runs to 220 residues: Adenylate kinase (220 aa).

An ATP-binding site is contributed by 10–15; it reads GAGKGT. Residues 30–59 are NMP; it reads STGDMLRAAVKAGSPLGVEAKGYMDAGKLV. Residues Thr-31, Arg-36, 57–59, 85–88, and Gln-92 contribute to the AMP site; these read KLV and GFPR. Positions 122–159 are LID; sequence GRRTHAASGRTYHVKFNPPKVEGQDDVTGEPLIQRDDD. ATP-binding positions include Arg-123 and 132–133; that span reads TY. AMP contacts are provided by Arg-156 and Arg-167. Gly-206 is a binding site for ATP.

The protein belongs to the adenylate kinase family. As to quaternary structure, monomer.

Its subcellular location is the cytoplasm. The catalysed reaction is AMP + ATP = 2 ADP. It functions in the pathway purine metabolism; AMP biosynthesis via salvage pathway; AMP from ADP: step 1/1. Catalyzes the reversible transfer of the terminal phosphate group between ATP and AMP. Plays an important role in cellular energy homeostasis and in adenine nucleotide metabolism. This Burkholderia vietnamiensis (strain G4 / LMG 22486) (Burkholderia cepacia (strain R1808)) protein is Adenylate kinase.